Reading from the N-terminus, the 236-residue chain is Ubiquinone biosynthesis O-methyltransferase (236 aa).

S-adenosyl-L-methionine-binding residues include Arg-39, Gly-59, Asp-80, and Met-124.

It belongs to the methyltransferase superfamily. UbiG/COQ3 family.

It catalyses the reaction a 3-demethylubiquinol + S-adenosyl-L-methionine = a ubiquinol + S-adenosyl-L-homocysteine + H(+). The enzyme catalyses a 3-(all-trans-polyprenyl)benzene-1,2-diol + S-adenosyl-L-methionine = a 2-methoxy-6-(all-trans-polyprenyl)phenol + S-adenosyl-L-homocysteine + H(+). The protein operates within cofactor biosynthesis; ubiquinone biosynthesis. Functionally, O-methyltransferase that catalyzes the 2 O-methylation steps in the ubiquinone biosynthetic pathway. The polypeptide is Ubiquinone biosynthesis O-methyltransferase (Shewanella halifaxensis (strain HAW-EB4)).